The chain runs to 1057 residues: Desmoglein-1-alpha (1057 aa).

The first 23 residues, 1–23, serve as a signal peptide directing secretion; sequence MDWHSFRIAALLLTSLVVLEVNS. Positions 24-49 are excised as a propeptide; that stretch reads EFQIQVRDHNAKNGTIKWHSIRRQKR. Cadherin domains follow at residues 50–157, 158–269, 270–389, and 386–493; these read EWIK…PPVF, SMTT…IPYL, EQSS…RPGS, and RPGS…TGSE. Over 50–564 the chain is Extracellular; sequence EWIKFAAACR…LYGDNVHFGP (515 aa). Residues N110 and N180 are each glycosylated (N-linked (GlcNAc...) asparagine). Residues 490 to 552 are disordered; sequence TGSESGGSSS…FQGDPDETLE (63 aa). The segment covering 510-525 has biased composition (polar residues); the sequence is NGYQGTSSTENPQRVT. The chain crosses the membrane as a helical span at residues 565 to 585; it reads AGIGLLIMGFLVLGLVPFLLI. Topologically, residues 586–1057 are cytoplasmic; that stretch reads CCDCGGAPGG…TKYNTVQYSK (472 aa). Desmoglein repeat repeat units follow at residues 832–858, 859–888, 889–918, 919–946, and 947–975; these read AYHS…TVRE, SYTT…ERVV, GPIS…ERVI, APGS…ERVI, and QPTS…ERVV.

As to quaternary structure, binds to JUP/plakoglobin. Interacts with PKP2. Interacts with DSC3; there is evidence to suggest that the interaction promotes cell-cell adhesion of keratinocytes. Expressed in testis.

Its subcellular location is the cell membrane. It localises to the cell junction. The protein localises to the desmosome. The protein resides in the cytoplasm. It is found in the nucleus. Functionally, component of intercellular desmosome junctions. Involved in the interaction of plaque proteins and intermediate filaments mediating cell-cell adhesion. This is Desmoglein-1-alpha (Dsg1a) from Mus musculus (Mouse).